The chain runs to 822 residues: Molybdenum cofactor sulfurase (822 aa).

An N6-(pyridoxal phosphate)lysine modification is found at Lys-239. Residue Cys-401 is part of the active site. Residues 633 to 666 are disordered; that stretch reads TRISNPTRSSRRSQRALMPGSFPEDPSPTSEQPP. The region spanning 643 to 820 is the MOSC domain; it reads RRSQRALMPG…VMVGDVVTPQ (178 aa).

This sequence belongs to the class-V pyridoxal-phosphate-dependent aminotransferase family. MOCOS subfamily. Requires pyridoxal 5'-phosphate as cofactor.

It catalyses the reaction Mo-molybdopterin + L-cysteine + AH2 = thio-Mo-molybdopterin + L-alanine + A + H2O. It functions in the pathway cofactor biosynthesis; molybdopterin biosynthesis. Sulfurates the molybdenum cofactor. Sulfation of molybdenum is essential for xanthine dehydrogenase (XDH) and aldehyde oxidase (ADO) enzymes in which molybdenum cofactor is liganded by 1 oxygen and 1 sulfur atom in active form. In Aspergillus oryzae (strain ATCC 42149 / RIB 40) (Yellow koji mold), this protein is Molybdenum cofactor sulfurase.